Consider the following 199-residue polypeptide: FMN-dependent NADH:quinone oxidoreductase 2 (199 aa).

FMN-binding positions include S10, 17-19, and 135-138; these read SDS and TKGG.

Belongs to the azoreductase type 1 family. In terms of assembly, homodimer. Requires FMN as cofactor.

It catalyses the reaction 2 a quinone + NADH + H(+) = 2 a 1,4-benzosemiquinone + NAD(+). The enzyme catalyses N,N-dimethyl-1,4-phenylenediamine + anthranilate + 2 NAD(+) = 2-(4-dimethylaminophenyl)diazenylbenzoate + 2 NADH + 2 H(+). Its function is as follows. Quinone reductase that provides resistance to thiol-specific stress caused by electrophilic quinones. In terms of biological role, also exhibits azoreductase activity. Catalyzes the reductive cleavage of the azo bond in aromatic azo compounds to the corresponding amines. The polypeptide is FMN-dependent NADH:quinone oxidoreductase 2 (Mesoplasma florum (strain ATCC 33453 / NBRC 100688 / NCTC 11704 / L1) (Acholeplasma florum)).